The primary structure comprises 410 residues: 3-phosphoshikimate 1-carboxyvinyltransferase (410 aa).

Residues lysine 27, serine 28, and arginine 32 each contribute to the 3-phosphoshikimate site. A phosphoenolpyruvate-binding site is contributed by lysine 27. Glycine 91 and arginine 119 together coordinate phosphoenolpyruvate. Positions 161, 162, 163, 297, 319, and 323 each coordinate 3-phosphoshikimate. Glutamine 163 contributes to the phosphoenolpyruvate binding site. Catalysis depends on aspartate 297, which acts as the Proton acceptor. Residues arginine 327, arginine 368, and lysine 394 each coordinate phosphoenolpyruvate.

The protein belongs to the EPSP synthase family. As to quaternary structure, monomer.

It localises to the cytoplasm. The enzyme catalyses 3-phosphoshikimate + phosphoenolpyruvate = 5-O-(1-carboxyvinyl)-3-phosphoshikimate + phosphate. Its pathway is metabolic intermediate biosynthesis; chorismate biosynthesis. In terms of biological role, catalyzes the transfer of the enolpyruvyl moiety of phosphoenolpyruvate (PEP) to the 5-hydroxyl of shikimate-3-phosphate (S3P) to produce enolpyruvyl shikimate-3-phosphate and inorganic phosphate. The protein is 3-phosphoshikimate 1-carboxyvinyltransferase of Pyrococcus abyssi (strain GE5 / Orsay).